A 378-amino-acid chain; its full sequence is Circumsporozoite protein (378 aa).

The N-terminal stretch at 1–22 (MKNFNLLVVSSILLVDLFPTNC) is a signal peptide. Residues 50–288 (AQVRQSASRG…AGAGQGQNNE (239 aa)) are disordered. Positions 65–93 (NPKDEEGADKPKKKEEKKVEPKKPRENKL) are enriched in basic and acidic residues. Residues 81–89 (KKVEPKKPR) form a required for the binding to heparan sulfate proteoglycans (HSPGs) on the surface of host hepatocytes region. Residues 92-96 (KLKQP) form a region I; contains the proteolytic cleavage site region. The span at 96 to 203 (PPAGDGAPEG…RAGGQPAAGG (108 aa)) shows a compositional bias: low complexity. One copy of the 1-1; truncated repeat lies at 97–102 (PAGDGA). The tract at residues 97–191 (PAGDGAPEGD…AAPAGDGAPA (95 aa)) is 11 X 9 AA tandem repeats of P-[AE]-G-D-G-A-P-A-[AG]. Repeat copies occupy residues 103–111 (PEGDGAPAA), 112–120 (PAGDGAPAA), 121–129 (PAGDGAPAA), 130–138 (PAGDGAPAA), 139–147 (PAGDGAPAA), 148–156 (PAGDGAPAA), 157–165 (PAGDGAPAA), 166–174 (PAGDGAPAA), 175–183 (PAGDGAPAA), 184–191 (PAGDGAPA), 193–208 (NRAG…QAGG), 209–224 (NRAG…QAGG), and 225–240 (NRAG…QAGG). The 6 X 16 AA approximate tandem repeats of N-R-A-G-G-Q-P-A-A-G-G-N-Q-A-G-G stretch occupies residues 193-268 (NRAGGQPAAG…GAQAGGANAG (76 aa)). Residues 228-251 (GGQPAAGGNQAGGQPAAGGNQAGA) show a composition bias toward low complexity. The stretch at 241-251 (QPAAGGNQAGA) is one 2-4; approximate; truncated repeat. Residues 252-260 (QAGGNQAGA) form a 2-5; approximate; truncated repeat. Composition is skewed to gly residues over residues 252–266 (QAGG…GGAN) and 274–283 (EAGGNAGAGQ). The 2-6; approximate; truncated repeat unit spans residues 261 to 268 (QAGGANAG). Residues 304-356 (KIRSTLGVEWSPCSVTCGKGVRMRRKVSAANKKPEELDVNDLETEVCTMDKCA) form the TSP type-1 domain. Intrachain disulfides connect Cys-316-Cys-350 and Cys-320-Cys-355. The O-linked (Fuc) threonine glycan is linked to Thr-319. Cys-355 is lipidated: GPI-anchor amidated cysteine. A propeptide spans 356–378 (AGIFNVVSNSLRLVILLVLALFN) (removed in mature form).

The protein belongs to the plasmodium circumsporozoite protein family. Post-translationally, during host cell invasion, proteolytically cleaved at the cell membrane in the region I by a papain-like cysteine protease of parasite origin. Cleavage is triggered by the sporozoite contact with highly sulfated heparan sulfate proteoglycans (HSPGs) present on the host hepatocyte cell surface. Cleavage exposes the TSP type-1 (TSR) domain and is required for productive invasion of host hepatocytes but not for adhesion to the host cell membrane. Cleavage is dispensable for sporozoite development in the oocyst, motility and for traversal of host and vector cells. O-glycosylated; maybe by POFUT2.

It is found in the cell membrane. The protein resides in the cytoplasm. Essential sporozoite protein. In the mosquito vector, required for sporozoite development in the oocyst, migration through the vector hemolymph and entry into the vector salivary glands. In the vertebrate host, required for sporozoite migration through the host dermis and infection of host hepatocytes. Binds to highly sulfated heparan sulfate proteoglycans (HSPGs) on the surface of host hepatocytes. In terms of biological role, in the vertebrate host, binds to highly sulfated heparan sulfate proteoglycans (HSPGs) on the surface of host hepatocytes and is required for sporozoite invasion of the host hepatocytes. The sequence is that of Circumsporozoite protein from Plasmodium cynomolgi (strain Berok).